The chain runs to 235 residues: Ribonuclease HII (235 aa).

One can recognise an RNase H type-2 domain in the interval 23-212 (GLVAGVDEAG…VAHVVSIARM (190 aa)). Positions 29, 30, and 121 each coordinate a divalent metal cation.

The protein belongs to the RNase HII family. It depends on Mn(2+) as a cofactor. The cofactor is Mg(2+).

It localises to the cytoplasm. The enzyme catalyses Endonucleolytic cleavage to 5'-phosphomonoester.. Functionally, endonuclease that specifically degrades the RNA of RNA-DNA hybrids. The chain is Ribonuclease HII from Delftia acidovorans (strain DSM 14801 / SPH-1).